Consider the following 308-residue polypeptide: Porphobilinogen deaminase (308 aa).

Position 241 is an S-(dipyrrolylmethanemethyl)cysteine (C241).

It belongs to the HMBS family. In terms of assembly, monomer. Requires dipyrromethane as cofactor.

It catalyses the reaction 4 porphobilinogen + H2O = hydroxymethylbilane + 4 NH4(+). The protein operates within porphyrin-containing compound metabolism; protoporphyrin-IX biosynthesis; coproporphyrinogen-III from 5-aminolevulinate: step 2/4. In terms of biological role, tetrapolymerization of the monopyrrole PBG into the hydroxymethylbilane pre-uroporphyrinogen in several discrete steps. The chain is Porphobilinogen deaminase from Staphylococcus aureus (strain MSSA476).